A 137-amino-acid chain; its full sequence is Nucleoside diphosphate kinase (137 aa).

Residues lysine 9, phenylalanine 57, arginine 85, threonine 91, arginine 102, and asparagine 112 each coordinate ATP. The Pros-phosphohistidine intermediate role is filled by histidine 115.

It belongs to the NDK family. Homotetramer. It depends on Mg(2+) as a cofactor.

Its subcellular location is the cytoplasm. The enzyme catalyses a 2'-deoxyribonucleoside 5'-diphosphate + ATP = a 2'-deoxyribonucleoside 5'-triphosphate + ADP. It catalyses the reaction a ribonucleoside 5'-diphosphate + ATP = a ribonucleoside 5'-triphosphate + ADP. Its function is as follows. Major role in the synthesis of nucleoside triphosphates other than ATP. The ATP gamma phosphate is transferred to the NDP beta phosphate via a ping-pong mechanism, using a phosphorylated active-site intermediate. The protein is Nucleoside diphosphate kinase of Campylobacter jejuni subsp. jejuni serotype O:2 (strain ATCC 700819 / NCTC 11168).